Consider the following 428-residue polypeptide: MLPLYRFPQEASALQERLVRHVSFDEAAHKAVDEILAKVRQQGDRAVLNYTEQFQGVRLTSMQVDEEAIEMAYRHADPSLIATLHEAYANIVRFHEHEVERSFFYEAEGGVLLGQRVRPMERAMLYVPGGKAAYPSSLLMNAAPAKVAGVCEIAVTTPCDATGVVNPTILAAAKVAGISSIYKIGGAQAVAAFAYGTESIPKVDIITGPGNKYVALAKKQVFGHVAIDSIAGPSEVVIIADESAHAEFVALDMFAQAEHDPDASAVLITTSESFAQAVQQAVASLLPTMLRHETIASSLLHNGAMVLVPSLDDACAVSDMLAPEHLELHVVQPWDILPKLKHAGAIFMGSYSCETIGDYFAGPNHTLPTSGTARFFSPLSVRDFVKHTSIISYSPEQLRSKGAQIAAFADAEGLQAHAEAVRVRLKTL.

NAD(+) contacts are provided by tyrosine 126, glutamine 188, and asparagine 211. Residues serine 234, glutamine 256, and histidine 259 each contribute to the substrate site. Zn(2+) is bound by residues glutamine 256 and histidine 259. Active-site proton acceptor residues include glutamate 324 and histidine 325. The substrate site is built by histidine 325, aspartate 358, glutamate 412, and histidine 417. Residue aspartate 358 coordinates Zn(2+). Residue histidine 417 participates in Zn(2+) binding.

The protein belongs to the histidinol dehydrogenase family. Requires Zn(2+) as cofactor.

It catalyses the reaction L-histidinol + 2 NAD(+) + H2O = L-histidine + 2 NADH + 3 H(+). It participates in amino-acid biosynthesis; L-histidine biosynthesis; L-histidine from 5-phospho-alpha-D-ribose 1-diphosphate: step 9/9. Catalyzes the sequential NAD-dependent oxidations of L-histidinol to L-histidinaldehyde and then to L-histidine. This Chlorobium chlorochromatii (strain CaD3) protein is Histidinol dehydrogenase.